The following is a 974-amino-acid chain: MAFSKFGKMFRLPTIEIKKKTKQYNHLQRDVNPNDMWEIIGELGDGAFGKVYKAQNKETGVLAAAKVIETKSEEELEDYMVEIDILASCNHQYIVKLLDAFFFDNKLSIMIEFCPGGAVDAIMLELDRGLQEPQIRVICKQMLEALQYLHSMKIIHRDLKAGNILLTLDGDIKLADFGVSAKNTKTLQRRDSFIGTPYWMAPEVVMCETMKDAPYDYKADIWSLGITLIELAQIEPPHHELNPMRVLLKIAKSEPPGLDQPSKWSMDFNDFLKKALDRHPETRPTAAQLLEHPFVSSVNTNRPLRELVAEAKAEVMEEIEDNHEDGEDEDPADLTPVQAPTKDPSQTSATSLNGDHPHGTCYAETSMEIEEEPSTLESTKTPLKEQEDNLSDKFQVEDHDKPESEASGKASSSDSGIEDGKSTPTSEEDTKTVEASEPELPVQRTPTPAEEPEYPSETMEKYLEKPKEPEKEDHCEETQPVLKRIQLKDPNGRMSVVSNRSSFAGDDAESLVSHTNGRLSNRYSDVASDSMDISLNLSGDLSVNKEMGTISLRDSKKTLKRTRRFLVDGVEVSVTTSKIITDDEKKDEEMRFLRRQELRDLRLLQKEQHRSLTVLNMKLKEQREQMHRRFDQEMNAKKKYYYTELEALEKHQKQTIERMETEHSNSLREEGKRIRVEQEKAYQKFLDQMKQKKKEVKQEVEKMPRNQRKDTMKMKMNNYQQMRSDEEQKFIADQKEYLDVTLKSIISKNKHEISETERQCLLKKQNLVREREATLWDMEEKNLHERHQLHKQQLKDQYFLQRHQLLKKHEKEQEQMLHYNLRMVELLKARQQQERNRLPKIQRNEAKTRMVMFKKSLKINSSGSAAEDREKVKQFSRMEEKRQKAERLHQQQKHENQMREMLSQCDGNTRELQQLQNEKCHLLIENETQRLKSLDEQHNQQLKEWREHLKPRKKVLEDELTLRKRAGAFLQDDG.

The Protein kinase domain maps to 37–295 (WEIIGELGDG…AAQLLEHPFV (259 aa)). Residues 43–51 (LGDGAFGKV) and Lys-66 each bind ATP. Asp-158 functions as the Proton acceptor in the catalytic mechanism. The span at 320-332 (EDNHEDGEDEDPA) shows a compositional bias: acidic residues. Residues 320 to 479 (EDNHEDGEDE…EKEDHCEETQ (160 aa)) are disordered. Polar residues predominate over residues 343–353 (DPSQTSATSLN). Composition is skewed to basic and acidic residues over residues 382–406 (PLKEQEDNLSDKFQVEDHDKPESEA) and 458–477 (TMEKYLEKPKEPEKEDHCEE). 2 coiled-coil regions span residues 605 to 729 (QKEQ…EEQK) and 870 to 950 (EKVK…EHLK).

This sequence belongs to the protein kinase superfamily. STE Ser/Thr protein kinase family. STE20 subfamily. Homodimer. Autophosphorylates.

Its subcellular location is the cell membrane. The catalysed reaction is L-seryl-[protein] + ATP = O-phospho-L-seryl-[protein] + ADP + H(+). The enzyme catalyses L-threonyl-[protein] + ATP = O-phospho-L-threonyl-[protein] + ADP + H(+). In terms of biological role, may act as a polo kinase kinase by mediating phosphorylation of plk1. In Danio rerio (Zebrafish), this protein is Serine/threonine-protein kinase 10 (stk10).